The following is a 353-amino-acid chain: Jasmonate-induced oxygenase 4 (353 aa).

The Fe2OG dioxygenase domain maps to 202–302; the sequence is VGASLRTNFY…RVSLAFFYNP (101 aa). Jasmonate is bound at residue R207. The 2-oxoglutarate site is built by N209 and Y211. The Fe cation site is built by H226, D228, and H283. Positions 293 and 295 each coordinate 2-oxoglutarate. R332 and R336 together coordinate jasmonate.

This sequence belongs to the iron/ascorbate-dependent oxidoreductase family. L-ascorbate is required as a cofactor. It depends on Fe(2+) as a cofactor.

The enzyme catalyses jasmonate + 2-oxoglutarate + O2 = (1R,2R)-12-hydroxyjasmonate + succinate + CO2. In terms of biological role, 2-oxoglutarate-dependent dioxygenase involved in the oxidation of jasmonate (JA), a stress-induced phytohormone synthesized in response to attack by pathogens and herbivores, which triggers the activation of defense responses via the JA-mediated signaling pathway. Converts JA to 12-hydroxyjasmonate (12OH-JA), an inactive form of JA. Is specific to free JA, and cannot oxidize the bioactive form jasmonoyl-L-isoleucine (JA-Ile) or other JA-amino acid conjugates. Prevents over-accumulation of JA and indirectly its bioactive form JA-Ile under stress response. Acts as a negative regulator of JA-mediated defense signaling, by contributing to 12OH-JA accumulation, which represses JA defense responses upon infection by the fungal pathogen Botrytis cinerea. Acts as a negative regulator of JA-mediated defense responses upon infestation by the herbivorous caterpillar Mamestra brassicae. The sequence is that of Jasmonate-induced oxygenase 4 from Arabidopsis thaliana (Mouse-ear cress).